The sequence spans 315 residues: O-antigen chain rhamnosyltransferase WbaN (315 aa).

The protein belongs to the glycosyltransferase 2 family.

The enzyme catalyses alpha-D-galactosyl-di-trans,octa-cis-undecaprenyl diphosphate + dTDP-beta-L-rhamnose = alpha-L-rhamnosyl-(1-&gt;3)-alpha-D-galactosyl-1-diphospho-di-trans,octa-cis-undecaprenol + dTDP + H(+). Its pathway is bacterial outer membrane biogenesis; LPS O-antigen biosynthesis. Its function is as follows. Rhamnosyltransferase involved in the biosynthesis of the repeat unit of the lipopolysaccharide (LPS) O-antigen region. Catalyzes the addition of a rhamnose to the galactosyl-undecaprenyl diphosphate intermediate. In Salmonella anatum, this protein is O-antigen chain rhamnosyltransferase WbaN.